We begin with the raw amino-acid sequence, 99 residues long: Large ribosomal subunit protein bL27 (99 aa).

The propeptide occupies 1 to 9; that stretch reads MLIMNLQLF.

This sequence belongs to the bacterial ribosomal protein bL27 family. The N-terminus is cleaved by ribosomal processing cysteine protease Prp.

The protein is Large ribosomal subunit protein bL27 of Clostridium botulinum (strain Alaska E43 / Type E3).